The following is a 448-amino-acid chain: Beclin-1 (448 aa).

Met-1 bears the N-acetylmethionine mark. Residues Ser-14 and Ser-29 each carry the phosphoserine modification. Residues 47-72 form a disordered region; that stretch reads TTAQAKPGESQEEEANSGEEPFIETR. Phosphoserine; by AMPK occurs at positions 88, 91, and 94. The short motif at 106 to 125 is the BH3 element; the sequence is TMENLSRRLKVTGDLFDIMS. The tract at residues 110-157 is interaction with BCL2 and BCL2L1 isoform Bcl-X(L); it reads LSRRLKVTGDLFDIMSGQTDVDHPLCEECTDTLLDQLDTQLNVTENEC. The residue at position 117 (Thr-117) is a Phosphothreonine; by DAPK1. Positions 140-267 form a coiled coil; sequence DTLLDQLDTQ…QLDKLKKTNV (128 aa). The evolutionary conserved domain (ECD) stretch occupies residues 243-448; sequence DELKSVENQM…AWVSSQFYNK (206 aa). Glycyl lysine isopeptide (Lys-Gly) (interchain with G-Cter in ubiquitin) cross-links involve residues Lys-400 and Lys-435. The tract at residues 423 to 448 is required for membrane-association; sequence WTKALKFMLTNLKWGLAWVSSQFYNK.

The protein belongs to the beclin family. In terms of assembly, a homodimeric form is proposed to exist; this metastable form readily transits to ATG14- or UVRAG-containing complexes with BECN1:UVRAG being more stable than BECN1:ATG14. Component of the PI3K (PI3KC3/PI3K-III/class III phosphatidylinositol 3-kinase) complex the core of which is composed of the catalytic subunit PIK3C3, the regulatory subunit PIK3R4 and BECN1 associating with additional regulatory/auxiliary subunits to form alternative complex forms. Alternative complex forms containing a fourth regulatory subunit in a mutually exclusive manner are PI3K complex I (PI3KC3-C1) containing ATG14, and PI3K complex II (PI3KC3-C2) containing UVRAG. PI3KC3-C1 displays a V-shaped architecture with PIK3R4 serving as a bridge between PIK3C3 and the ATG14:BECN1 subcomplex. Both, PI3KC3-C1 and PI3KC3-C2, can associate with further regulatory subunits, such as RUBCN, SH3GLB1/Bif-1 and AMBRA1. PI3KC3-C1 probably associates with PIK3CB. Forms a complex with PPP2CA and AMBRA1; AMBRA1 and BECN1 components of the complex regulate MYC stability via different pathways. Component of the complex, at least composed of LRPPRC, BECN1 and BCL2; the interactions prevent BECN1 from forming an autophagy-inducing complex with PIK3C3. Interacts with AMBRA1, GOPC, GRID2. Interacts with BCL2 and BCL2L1 isoform Bcl-X(L); the interaction inhibits BECN1 function in promoting autophagy by interfering with the formation of the PI3K complex. Interacts with cytosolic HMGB1; inhibits the interaction of BECN1 and BCL2 leading to promotion of autophagy. Interacts with USP10, USP13, DAPK1, RAB39A. Interacts with SLAMF1. Interacts with the poly-Gln domain of ATXN3; the interaction causes deubiquitination at Lys-400 and stabilizes BECN1. Interacts with VMP1. Interacts with TRIM5; the interaction causes activation of BECN1 by causing its dissociation from its inhibitors BCL2 and TAB2. Interacts with active ULK1 (phosphorylated on 'Ser-317') and MEFV simultaneously. Interacts with WDR81 and WDR91; negatively regulates the PI3 kinase/PI3K activity associated with endosomal membranes. Interacts with LAPTM4B; competes with EGFR for LAPTM4B binding; regulates EGFR activity. Interacts with TRIM50. Interacts with TRIM16. Interacts with ATG14; this interaction is increased in the absence of TMEM39A. Interacts with WASHC1; preventing interaction with AMBRA1 and the DCX(AMBRA1) complex and subsequent ubiquitination. Interacts with TRIM17. Interacts with BCL2L10/BCL-B (via BH1 domain). Interacts with SH3BGRL. Interacts with IRGM; enhancing BECN1-interacting partners and influencing the composition of the BECN1 complex. Interacts with ARMC3. Interacts with LRPPRC. In terms of processing, phosphorylation at Thr-117 by DAPK1 reduces its interaction with BCL2 and BCL2L1 and promotes induction of autophagy. In response to autophagic stimuli, phosphorylated at serine residues by AMPK in an ATG14-dependent manner, and this phosphorylation is critical for maximally efficient autophagy. Post-translationally, polyubiquitinated by NEDD4, both with 'Lys-11'- and 'Lys-63'-linkages. 'Lys-11'-linked polyubiquitination leads to degradation and is enhanced when the stabilizing interaction partner VPS34 is depleted. Deubiquitinated by USP10 and USP13, leading to stabilize the PIK3C3/VPS34-containing complexes. Polyubiquitinated at Lys-400 with 'Lys-48'-linkages. 'Lys-48'-linked polyubiquitination of Lys-400 leads to degradation. Deubiquitinated by ATXN3, leading to stabilization. Ubiquitinated at Lys-435 via 'Lys-63'-linkage by the DCX(AMBRA1) complex, thereby increasing the association between BECN1 and PIK3C3 to promote PIK3C3 activity. 'Lys-48'-linked ubiquitination by RNF216 leads to proteasomal degradation and autophagy inhibition. Proteolytically processed by caspases including CASP8 and CASP3; the C-terminal fragments lack autophagy-inducing capacity and are proposed to induce apoptosis. Thus the cleavage is proposed to be an determinant to switch from autophagy to apoptosis pathways affecting cellular homeostasis including viral infections and survival of tumor cells.

It localises to the cytoplasm. The protein localises to the golgi apparatus. The protein resides in the trans-Golgi network membrane. It is found in the endosome membrane. Its subcellular location is the endoplasmic reticulum membrane. It localises to the mitochondrion membrane. The protein localises to the cytoplasmic vesicle. The protein resides in the autophagosome. It is found in the mitochondrion. Its subcellular location is the nucleus. In terms of biological role, plays a central role in autophagy. Acts as a core subunit of the PI3K complex that mediates formation of phosphatidylinositol 3-phosphate; different complex forms are believed to play a role in multiple membrane trafficking pathways: PI3KC3-C1 is involved in initiation of autophagosomes and PI3KC3-C2 in maturation of autophagosomes and endocytosis. Involved in regulation of degradative endocytic trafficking and required for the abscission step in cytokinesis, probably in the context of PI3KC3-C2. Essential for the formation of PI3KC3-C2 but not PI3KC3-C1 PI3K complex forms. Involved in endocytosis. May play a role in antiviral host defense. Beclin-1-C 35 kDa localized to mitochondria can promote apoptosis; it induces the mitochondrial translocation of BAX and the release of proapoptotic factors. The sequence is that of Beclin-1 (Becn1) from Rattus norvegicus (Rat).